The primary structure comprises 324 residues: tRNA uridine(34) hydroxylase (324 aa).

A Rhodanese domain is found at 122–218 (QENRCLILDV…YGQQVGTGKW (97 aa)). Residue cysteine 178 is the Cysteine persulfide intermediate of the active site.

The protein belongs to the TrhO family.

It carries out the reaction uridine(34) in tRNA + AH2 + O2 = 5-hydroxyuridine(34) in tRNA + A + H2O. Functionally, catalyzes oxygen-dependent 5-hydroxyuridine (ho5U) modification at position 34 in tRNAs. In Chlamydia pneumoniae (Chlamydophila pneumoniae), this protein is tRNA uridine(34) hydroxylase.